The chain runs to 112 residues: Large ribosomal subunit protein bL20c (112 aa).

The protein belongs to the bacterial ribosomal protein bL20 family.

It localises to the plastid. Its subcellular location is the chloroplast. Binds directly to 23S ribosomal RNA and is necessary for the in vitro assembly process of the 50S ribosomal subunit. It is not involved in the protein synthesizing functions of that subunit. The chain is Large ribosomal subunit protein bL20c (rpl20) from Chlamydomonas reinhardtii (Chlamydomonas smithii).